A 212-amino-acid chain; its full sequence is ATP-dependent Clp protease proteolytic subunit (212 aa).

The active-site Nucleophile is the S106. H131 is a catalytic residue.

The protein belongs to the peptidase S14 family. In terms of assembly, fourteen ClpP subunits assemble into 2 heptameric rings which stack back to back to give a disk-like structure with a central cavity, resembling the structure of eukaryotic proteasomes.

It is found in the cytoplasm. It carries out the reaction Hydrolysis of proteins to small peptides in the presence of ATP and magnesium. alpha-casein is the usual test substrate. In the absence of ATP, only oligopeptides shorter than five residues are hydrolyzed (such as succinyl-Leu-Tyr-|-NHMec, and Leu-Tyr-Leu-|-Tyr-Trp, in which cleavage of the -Tyr-|-Leu- and -Tyr-|-Trp bonds also occurs).. Functionally, cleaves peptides in various proteins in a process that requires ATP hydrolysis. Has a chymotrypsin-like activity. Plays a major role in the degradation of misfolded proteins. The sequence is that of ATP-dependent Clp protease proteolytic subunit from Rhodopseudomonas palustris (strain ATCC BAA-98 / CGA009).